We begin with the raw amino-acid sequence, 105 residues long: Protein LBH (105 aa).

The 87-residue stretch at 18 to 104 (MTEVMMNTQP…CEETAKENKE (87 aa)) folds into the LBH domain. S63 is modified (phosphoserine). Positions 86-96 (LVQEDEQDNCE) are enriched in acidic residues. The segment at 86 to 105 (LVQEDEQDNCEETAKENKEQ) is disordered.

The protein belongs to the LBH family. Highly expressed in heart, and expressed at low levels in placenta, lung, skeletal muscle, kidney and liver.

It localises to the nucleus. The protein localises to the cytoplasm. Its function is as follows. Transcriptional activator which may act in mitogen-activated protein kinase signaling pathway. The polypeptide is Protein LBH (Homo sapiens (Human)).